The following is a 644-amino-acid chain: MSLIECKNINRCFGSGENRVHILKDISLSIEKGDFVAIIGQSGSGKSTLMNILGCLDTAGSGSYRIDGIETAKMQPDELAALRRERFGFIFQRYNLLSSLTARDNVALPAVYMGMGGKERSARADKLLQDLGLASKEGNKPGELSGGQQQRVSIARALMNGGEIIFADEPTGALDTASGKNVMEIIRRLHEAGHTVIMVTHDPGIAANANRVIEIRDGEIISDTSKNPEIPASNVGRIREKASWSFYYDQFVEAFRMSVQAVLAHKMRSLLTMLGIIIGIASVVSVVALGNGSQKKILEDISSMGTNTISIFPGRGFGDRRSGKIKTLTIDDAKIIAKQSYVASATPMTSSGGTLTYRNTDLTASLYGVGEQYFDVRGLKLETGRLFDENDVKEDAQVVVIDQNVKDKLFADSDPLGKTILFRKRPLTVIGVMKKDENAFGNSDVLMLWSPYTTVMHQITGESHTNSITVKIKDNANTRVAEKGLAELLKARHGTEDFFMNNSDSIRQMVESTTGTMKLLISSIALISLVVGGIGVMNIMLVSVTERTKEIGIRMAIGARRGNILQQFLIEAVLICIIGGLVGVGLSAAVSLVFNHFVTDFPMDISAASVIGAVACSTGIGIAFGFMPANKAAKLNPIDALAQD.

An ABC transporter domain is found at 4–242 (IECKNINRCF…SNVGRIREKA (239 aa)). 40 to 47 (GQSGSGKS) lines the ATP pocket. The next 4 helical transmembrane spans lie at 270–290 (LLTM…VALG), 524–544 (IALI…LVSV), 574–594 (LICI…SLVF), and 607–627 (AASV…FGFM).

The protein belongs to the ABC transporter superfamily. Macrolide exporter (TC 3.A.1.122) family. Homodimer.

The protein resides in the cell inner membrane. Non-canonical ABC transporter that contains transmembrane domains (TMD), which form a pore in the inner membrane, and an ATP-binding domain (NBD), which is responsible for energy generation. Confers resistance against macrolides. This is Macrolide export ATP-binding/permease protein MacB from Neisseria gonorrhoeae (strain ATCC 700825 / FA 1090).